Reading from the N-terminus, the 138-residue chain is Basic phospholipase A2 PLA-B' (138 aa).

The N-terminal stretch at 1–16 is a signal peptide; it reads MRTLWITAVLLVGVEG. Intrachain disulfides connect Cys42-Cys131, Cys44-Cys60, Cys59-Cys111, Cys65-Cys138, Cys66-Cys104, Cys73-Cys97, and Cys91-Cys102. The Ca(2+) site is built by Tyr43, Gly45, and Gly47. His63 is an active-site residue. Asp64 contacts Ca(2+). Asp105 is an active-site residue.

It belongs to the phospholipase A2 family. Group II subfamily. D49 sub-subfamily. Requires Ca(2+) as cofactor. Expressed by the venom gland.

The protein localises to the secreted. The catalysed reaction is a 1,2-diacyl-sn-glycero-3-phosphocholine + H2O = a 1-acyl-sn-glycero-3-phosphocholine + a fatty acid + H(+). PLA2 catalyzes the calcium-dependent hydrolysis of the 2-acyl groups in 3-sn-phosphoglycerides. In Protobothrops flavoviridis (Habu), this protein is Basic phospholipase A2 PLA-B'.